The chain runs to 256 residues: Myeloblastin (256 aa).

Positions 1–25 are cleaved as a signal peptide; it reads MAHRPPSPALASVLLALLLSGAARA. Residues 26-27 constitute a propeptide that is removed on maturation; the sequence is AE. In terms of domain architecture, Peptidase S1 spans 28–248; sequence IVGGHEAQPH…YVDWIRSTLR (221 aa). An intrachain disulfide couples Cys56 to Cys72. Active-site charge relay system residues include His71 and Asp118. Asn129 and Asn174 each carry an N-linked (GlcNAc...) asparagine glycan. 3 disulfide bridges follow: Cys152–Cys209, Cys182–Cys188, and Cys199–Cys224. The active-site Charge relay system is Ser203. The propeptide occupies 249–256; the sequence is RVEAKGRP.

The protein belongs to the peptidase S1 family. Elastase subfamily. In terms of assembly, may form dimers. Interacts with CD177; the interaction tethers PRTN3 to the cell surface; the interaction is direct. Interacts with SERPINB1. Interacts with ADGRG3. Expressed in polymorphonuclear leukocytes (at protein level). Expressed in neutrophils (at protein level). Expressed in differentiating neutrophils.

The protein resides in the cytoplasmic granule. It localises to the secreted. It is found in the cell membrane. Its subcellular location is the membrane raft. It catalyses the reaction Hydrolysis of proteins, including elastin, by preferential cleavage: -Ala-|-Xaa- &gt; -Val-|-Xaa-.. Its activity is regulated as follows. Inhibited by phenylmethanesulfonyl fluoride (PMSF) and diisopropyl fluorophosphate (DFP). Its function is as follows. Serine protease that degrades elastin, fibronectin, laminin, vitronectin, and collagen types I, III, and IV (in vitro). By cleaving and activating receptor F2RL1/PAR-2, enhances endothelial cell barrier function and thus vascular integrity during neutrophil transendothelial migration. Plays a role in neutrophil transendothelial migration, probably when associated with CD177. Triggers inflammatory processes in neutrophils by interacting with ADGRG3 upstream of F2RL1/PAR2 activation. This is Myeloblastin (PRTN3) from Homo sapiens (Human).